Consider the following 130-residue polypeptide: Small ribosomal subunit protein uS9 (130 aa).

This sequence belongs to the universal ribosomal protein uS9 family.

In Herminiimonas arsenicoxydans, this protein is Small ribosomal subunit protein uS9.